We begin with the raw amino-acid sequence, 429 residues long: Glutamate-1-semialdehyde 2,1-aminomutase (429 aa).

N6-(pyridoxal phosphate)lysine is present on Lys265.

The protein belongs to the class-III pyridoxal-phosphate-dependent aminotransferase family. HemL subfamily. Homodimer. Pyridoxal 5'-phosphate serves as cofactor.

The protein resides in the cytoplasm. It carries out the reaction (S)-4-amino-5-oxopentanoate = 5-aminolevulinate. Its pathway is porphyrin-containing compound metabolism; protoporphyrin-IX biosynthesis; 5-aminolevulinate from L-glutamyl-tRNA(Glu): step 2/2. This is Glutamate-1-semialdehyde 2,1-aminomutase from Shewanella pealeana (strain ATCC 700345 / ANG-SQ1).